The chain runs to 257 residues: NAD-capped RNA hydrolase NudC (257 aa).

Arg69 contributes to the substrate binding site. Positions 98 and 101 each coordinate Zn(2+). Position 111 (Glu111) interacts with substrate. Zn(2+)-binding residues include Cys116 and Cys119. Tyr124 is a binding site for substrate. Positions 125–248 constitute a Nudix hydrolase domain; that stretch reads PQIAPCIIVA…TVARRLIEDT (124 aa). Ala158, Glu174, and Glu178 together coordinate a divalent metal cation. A Nudix box motif is present at residues 159–180; that stretch reads GFVEVGETLEQAAAREIFEESR. Position 192–199 (192–199) interacts with substrate; the sequence is QPWPFPHS. Residue Glu219 participates in a divalent metal cation binding. Ala241 is a binding site for substrate.

This sequence belongs to the Nudix hydrolase family. NudC subfamily. As to quaternary structure, homodimer. Mg(2+) is required as a cofactor. The cofactor is Mn(2+). Zn(2+) serves as cofactor.

It catalyses the reaction a 5'-end NAD(+)-phospho-ribonucleoside in mRNA + H2O = a 5'-end phospho-adenosine-phospho-ribonucleoside in mRNA + beta-nicotinamide D-ribonucleotide + 2 H(+). The catalysed reaction is NAD(+) + H2O = beta-nicotinamide D-ribonucleotide + AMP + 2 H(+). It carries out the reaction NADH + H2O = reduced beta-nicotinamide D-ribonucleotide + AMP + 2 H(+). Its function is as follows. mRNA decapping enzyme that specifically removes the nicotinamide adenine dinucleotide (NAD) cap from a subset of mRNAs by hydrolyzing the diphosphate linkage to produce nicotinamide mononucleotide (NMN) and 5' monophosphate mRNA. The NAD-cap is present at the 5'-end of some mRNAs and stabilizes RNA against 5'-processing. Has preference for mRNAs with a 5'-end purine. Catalyzes the hydrolysis of a broad range of dinucleotide pyrophosphates. This chain is NAD-capped RNA hydrolase NudC, found in Edwardsiella ictaluri (strain 93-146).